The chain runs to 397 residues: Lysophospholipid transporter LplT (397 aa).

Transmembrane regions (helical) follow at residues M16–A36, V53–A73, L91–I111, L139–A159, L164–I184, L227–L247, A253–A273, T281–V301, L305–P325, N352–P372, and V373–W393.

Belongs to the major facilitator superfamily. LplT (TC 2.A.1.42) family.

It localises to the cell inner membrane. Catalyzes the facilitated diffusion of 2-acyl-glycero-3-phosphoethanolamine (2-acyl-GPE) into the cell. The protein is Lysophospholipid transporter LplT of Klebsiella pneumoniae (strain 342).